The sequence spans 197 residues: Phospholipid hydroperoxide glutathione peroxidase (197 aa).

At serine 40 the chain carries Phosphoserine. Selenocysteine 73 is a catalytic residue. Position 73 (selenocysteine 73) is a non-standard amino acid, selenocysteine.

Belongs to the glutathione peroxidase family. As to quaternary structure, monomer. Has a tendency to form higher mass oligomers. Interacts with FUNDC1; this interaction promotes GPX4 recruitment into mitochondria through TOM/TIM complex where it is degraded by mitophagy.

Its subcellular location is the mitochondrion. It is found in the cytoplasm. It catalyses the reaction a hydroperoxy polyunsaturated fatty acid + 2 glutathione = a hydroxy polyunsaturated fatty acid + glutathione disulfide + H2O. The catalysed reaction is 2 glutathione + H2O2 = glutathione disulfide + 2 H2O. It carries out the reaction tert-butyl hydroperoxide + 2 glutathione = tert-butanol + glutathione disulfide + H2O. The enzyme catalyses cumene hydroperoxide + 2 glutathione = 2-phenylpropan-2-ol + glutathione disulfide + H2O. It catalyses the reaction (9S)-hydroperoxy-(10E,12Z)-octadecadienoate + 2 glutathione = (9S)-hydroxy-(10E,12Z)-octadecadienoate + glutathione disulfide + H2O. The catalysed reaction is (13S)-hydroperoxy-(9Z,11E)-octadecadienoate + 2 glutathione = (13S)-hydroxy-(9Z,11E)-octadecadienoate + glutathione disulfide + H2O. It carries out the reaction (5S)-hydroperoxy-(6E,8Z,11Z,14Z)-eicosatetraenoate + 2 glutathione = (5S)-hydroxy-(6E,8Z,11Z,14Z)-eicosatetraenoate + glutathione disulfide + H2O. The enzyme catalyses (12R)-hydroperoxy-(5Z,8Z,10E,14Z)-eicosatetraenoate + 2 glutathione = (12R)-hydroxy-(5Z,8Z,10E,14Z)-eicosatetraenoate + glutathione disulfide + H2O. It catalyses the reaction (12S)-hydroperoxy-(5Z,8Z,10E,14Z)-eicosatetraenoate + 2 glutathione = (12S)-hydroxy-(5Z,8Z,10E,14Z)-eicosatetraenoate + glutathione disulfide + H2O. The catalysed reaction is (15S)-hydroperoxy-(5Z,8Z,11Z,13E)-eicosatetraenoate + 2 glutathione = (15S)-hydroxy-(5Z,8Z,11Z,13E)-eicosatetraenoate + glutathione disulfide + H2O. It carries out the reaction (5S)-hydroperoxy-(6E,8Z,11Z,14Z,17Z)-eicosapentaenoate + 2 glutathione = (5S)-hydroxy-(6E,8Z,11Z,14Z,17Z)-eicosapentaenoate + glutathione disulfide + H2O. The enzyme catalyses (12S)-hydroperoxy-(5Z,8Z,10E,14Z,17Z)-eicosapentaenoate + 2 glutathione = (12S)-hydroxy-(5Z,8Z,10E,14Z,17Z)-eicosapentaenoate + glutathione disulfide + H2O. It catalyses the reaction (15S)-hydroperoxy-(5Z,8Z,11Z,13E,17Z)-eicosapentaenoate + 2 glutathione = (15S)-hydroxy-(5Z,8Z,11Z,13E,17Z)-eicosapentaenoate + glutathione disulfide + H2O. The catalysed reaction is (15S)-hydroperoxy-(11Z,13E)-eicosadienoate + 2 glutathione = (15S)-hydroxy-(11Z,13E)-eicosadienoate + glutathione disulfide + H2O. It carries out the reaction (17S)-hydroperoxy-(4Z,7Z,10Z,13Z,15E,19Z)-docosahexaenoate + 2 glutathione = (17S)-hydroxy-(4Z,7Z,10Z,13Z,15E,19Z)-docosahexaenoate + glutathione disulfide + H2O. The enzyme catalyses a hydroperoxy-1,2-diacyl-glycero-3-phosphocholine + 2 glutathione = a hydroxy-1,2-diacyl-glycero-3-phosphocholine + glutathione disulfide + H2O. Essential antioxidant peroxidase that directly reduces phospholipid hydroperoxide even if they are incorporated in membranes and lipoproteins. Can also reduce fatty acid hydroperoxide, cholesterol hydroperoxide and thymine hydroperoxide. Plays a key role in protecting cells from oxidative damage by preventing membrane lipid peroxidation. Required to prevent cells from ferroptosis, a non-apoptotic cell death resulting from an iron-dependent accumulation of lipid reactive oxygen species. The presence of selenocysteine (Sec) versus Cys at the active site is essential for life: it provides resistance to overoxidation and prevents cells against ferroptosis. The presence of Sec at the active site is also essential for the survival of a specific type of parvalbumin-positive interneurons, thereby preventing against fatal epileptic seizures. May be required to protect cells from the toxicity of ingested lipid hydroperoxides. Required for normal sperm development and male fertility. Essential for maturation and survival of photoreceptor cells. Plays a role in a primary T-cell response to viral and parasitic infection by protecting T-cells from ferroptosis and by supporting T-cell expansion. Plays a role of glutathione peroxidase in platelets in the arachidonic acid metabolism. Reduces hydroperoxy ester lipids formed by a 15-lipoxygenase that may play a role as down-regulator of the cellular 15-lipoxygenase pathway. Can also reduce small soluble hydroperoxides such as H2O2, cumene hydroperoxide and tert-butyl hydroperoxide. This Sus scrofa (Pig) protein is Phospholipid hydroperoxide glutathione peroxidase.